The primary structure comprises 219 residues: Urease accessory protein UreG (219 aa).

The tract at residues 1–20 (MSALHSIPHRSKKLPPLRVG) is disordered. Residue 23-30 (GPVGSGKT) participates in GTP binding.

This sequence belongs to the SIMIBI class G3E GTPase family. UreG subfamily. As to quaternary structure, homodimer. UreD, UreF and UreG form a complex that acts as a GTP-hydrolysis-dependent molecular chaperone, activating the urease apoprotein by helping to assemble the nickel containing metallocenter of UreC. The UreE protein probably delivers the nickel.

It is found in the cytoplasm. Functionally, facilitates the functional incorporation of the urease nickel metallocenter. This process requires GTP hydrolysis, probably effectuated by UreG. The polypeptide is Urease accessory protein UreG (Methylibium petroleiphilum (strain ATCC BAA-1232 / LMG 22953 / PM1)).